Reading from the N-terminus, the 267-residue chain is Tryptophan synthase alpha chain (267 aa).

Active-site proton acceptor residues include E49 and D60.

Belongs to the TrpA family. In terms of assembly, tetramer of two alpha and two beta chains.

The catalysed reaction is (1S,2R)-1-C-(indol-3-yl)glycerol 3-phosphate + L-serine = D-glyceraldehyde 3-phosphate + L-tryptophan + H2O. The protein operates within amino-acid biosynthesis; L-tryptophan biosynthesis; L-tryptophan from chorismate: step 5/5. In terms of biological role, the alpha subunit is responsible for the aldol cleavage of indoleglycerol phosphate to indole and glyceraldehyde 3-phosphate. The polypeptide is Tryptophan synthase alpha chain (Acidothermus cellulolyticus (strain ATCC 43068 / DSM 8971 / 11B)).